The following is a 434-amino-acid chain: Adenylosuccinate synthetase (434 aa).

GTP-binding positions include 25–31 and 53–55; these read GDEGKGK and GHT. Asp-26 serves as the catalytic Proton acceptor. 2 residues coordinate Mg(2+): Asp-26 and Gly-53. IMP is bound by residues 26-29, 51-54, Thr-142, Arg-156, Asn-233, Thr-248, and Arg-312; these read DEGK and NAGH. The Proton donor role is filled by His-54. Position 308–314 (308–314) interacts with substrate; it reads VTTGRKR. GTP contacts are provided by residues Arg-314, 340–342, and 422–424; these read KLD and GVG.

Belongs to the adenylosuccinate synthetase family. In terms of assembly, homodimer. Requires Mg(2+) as cofactor.

The protein resides in the cytoplasm. The enzyme catalyses IMP + L-aspartate + GTP = N(6)-(1,2-dicarboxyethyl)-AMP + GDP + phosphate + 2 H(+). It functions in the pathway purine metabolism; AMP biosynthesis via de novo pathway; AMP from IMP: step 1/2. Plays an important role in the de novo pathway and in the salvage pathway of purine nucleotide biosynthesis. Catalyzes the first committed step in the biosynthesis of AMP from IMP. The polypeptide is Adenylosuccinate synthetase (Schizosaccharomyces japonicus (strain yFS275 / FY16936) (Fission yeast)).